Reading from the N-terminus, the 548-residue chain is Peptidyl-prolyl isomerase CWC27 (548 aa).

Residues P11 to I193 enclose the PPIase cyclophilin-type domain. Disordered regions lie at residues R204–E436 and T504–K548. Basic and acidic residues-rich tracts occupy residues E328 to E340, I353 to A366, R406 to E428, and T504 to R516.

Belongs to the cyclophilin-type PPIase family. CWC27 subfamily. In terms of assembly, associated with the spliceosome.

The protein localises to the cytoplasm. Its subcellular location is the nucleus. The catalysed reaction is [protein]-peptidylproline (omega=180) = [protein]-peptidylproline (omega=0). Its function is as follows. PPIases accelerate the folding of proteins. It catalyzes the cis-trans isomerization of proline imidic peptide bonds in oligopeptides. Involved in pre-mRNA splicing. This is Peptidyl-prolyl isomerase CWC27 (CWC27) from Gibberella zeae (strain ATCC MYA-4620 / CBS 123657 / FGSC 9075 / NRRL 31084 / PH-1) (Wheat head blight fungus).